We begin with the raw amino-acid sequence, 661 residues long: Heme transporter BhuA (661 aa).

A signal peptide spans 1–23; that stretch reads MKFTRTLVLASTFLLATVATSQA. In terms of domain architecture, TBDR plug spans 48–159; the sequence is KDNIEATGGT…AAGAIRYETV (112 aa). The region spanning 170 to 661 is the TBDR beta-barrel domain; the sequence is TFGARIIGSY…TFTFQTAFKF (492 aa).

Belongs to the TonB-dependent receptor family.

The protein localises to the cell outer membrane. Heme transporter. This chain is Heme transporter BhuA (bhuA), found in Brucella suis biovar 1 (strain 1330).